Consider the following 156-residue polypeptide: Endogenous retrovirus group K member 6 Pro protein (156 aa).

The region spanning Phe21–Leu96 is the Peptidase A2 domain. Asp26 is a catalytic residue. The G-patch domain occupies Tyr111–Cys156.

Belongs to the peptidase A2 family. HERV class-II K(HML-2) subfamily. In terms of assembly, active as a homodimer. Post-translationally, autoproteolytically processed at the N-terminus. Expected C-terminal autoprocessing not detected. The sequence shown is that of the processed Pro protein.

The enzyme catalyses Processing at the authentic HIV-1 PR recognition site and release of the mature p17 matrix and the p24 capsid protein, as a result of the cleavage of the -SQNY-|-PIVQ- cleavage site.. In terms of biological role, retroviral proteases have roles in the processing of the primary translation products and the maturation of the viral particle. Endogenous Pro proteins may have kept, lost or modified their original function during evolution. This chain is Endogenous retrovirus group K member 6 Pro protein (ERVK-6), found in Homo sapiens (Human).